Consider the following 550-residue polypeptide: Arginine--tRNA ligase (550 aa).

Positions 130-140 (ANPTGPIHIGG) match the 'HIGH' region motif.

It belongs to the class-I aminoacyl-tRNA synthetase family. As to quaternary structure, monomer.

It localises to the cytoplasm. The enzyme catalyses tRNA(Arg) + L-arginine + ATP = L-arginyl-tRNA(Arg) + AMP + diphosphate. In Mycobacterium tuberculosis (strain CDC 1551 / Oshkosh), this protein is Arginine--tRNA ligase (argS).